Reading from the N-terminus, the 642-residue chain is MVHITLGQAIWVSVKPIIKIYLIIGVGFLMAKMGILTVEATRIISDIVLTVLLPSLSFNKIVANIEDKDIKSVGIICLSALLIFGSGFFFAYVVRLFLPVPKQWYGGILAGGMFPNISDLPIAYLQSMDQGLVFSEEEGNKGVANVIIFLTMFLICIFNLGGFRLIESDFEYNDDESAVRVSETTKTQPAVSANTTNTDTSERFFSNEQQLFNNKYTARDSLTEAIGTKGENADVPPISRRSTNSIAPLSLPDTSSNSKITKPVQVKARNTIACTQSEESQATRGSNPLDSQSSASTIHSYNTSESYESSIDTMRARRTASQPRAYNTTTLLEENCLDEKCPKNMSMAALEPIRSIDMRALPSQNIHHLIREYSNVDQYGHQRRNSSLRGADMNDVHSISSNSTLQTIKTANLTRILTSDATVSKKDIETSGESLPQWMRKFSLTPLLVFFLKNCLRPCSMAVIIALTVAFIPWVKALFVTTANTPHISQAPDNAPPLSFFMDFTGYVGAACVPFGLILLGATLGRLKIGNLYPGFWKAAVTLVILRQCVMPIFGVLWCDRLVKAGWVNWQDDRMLLFVIAISWNLPTMTTLIYFTASFTPPETTAPIQMECVSFFLMLQYPLMVVSLPFLVSYFLKVQMNL.

Topologically, residues 1–15 (MVHITLGQAIWVSVK) are cytoplasmic. A helical membrane pass occupies residues 16 to 36 (PIIKIYLIIGVGFLMAKMGIL). The Extracellular portion of the chain corresponds to 37–42 (TVEATR). The helical transmembrane segment at 43–63 (IISDIVLTVLLPSLSFNKIVA) threads the bilayer. Residues 64–73 (NIEDKDIKSV) lie on the Cytoplasmic side of the membrane. Residues 74–94 (GIICLSALLIFGSGFFFAYVV) traverse the membrane as a helical segment. At 95-104 (RLFLPVPKQW) the chain is on the extracellular side. Residues 105-125 (YGGILAGGMFPNISDLPIAYL) form a helical membrane-spanning segment. Residues 126 to 142 (QSMDQGLVFSEEEGNKG) are Cytoplasmic-facing. The helical transmembrane segment at 143 to 163 (VANVIIFLTMFLICIFNLGGF) threads the bilayer. Over 164–460 (RLIESDFEYN…FLKNCLRPCS (297 aa)) the chain is Extracellular. Disordered stretches follow at residues 183–206 (ETTK…RFFS) and 227–324 (GTKG…SQPR). Composition is skewed to polar residues over residues 240–260 (RRST…NSKI) and 272–312 (IACT…SSID). A helical membrane pass occupies residues 461 to 481 (MAVIIALTVAFIPWVKALFVT). Topologically, residues 482–499 (TANTPHISQAPDNAPPLS) are cytoplasmic. A helical membrane pass occupies residues 500 to 520 (FFMDFTGYVGAACVPFGLILL). Over 521 to 538 (GATLGRLKIGNLYPGFWK) the chain is Extracellular. A helical membrane pass occupies residues 539–559 (AAVTLVILRQCVMPIFGVLWC). The Cytoplasmic segment spans residues 560 to 574 (DRLVKAGWVNWQDDR). A helical membrane pass occupies residues 575–595 (MLLFVIAISWNLPTMTTLIYF). The Extracellular portion of the chain corresponds to 596–614 (TASFTPPETTAPIQMECVS). The chain crosses the membrane as a helical span at residues 615 to 635 (FFLMLQYPLMVVSLPFLVSYF). At 636 to 642 (LKVQMNL) the chain is on the cytoplasmic side.

Belongs to the auxin efflux carrier (TC 2.A.69) family.

It localises to the membrane. This is an uncharacterized protein from Saccharomyces cerevisiae (strain ATCC 204508 / S288c) (Baker's yeast).